Here is a 360-residue protein sequence, read N- to C-terminus: Histidinol-phosphate aminotransferase (360 aa).

Lys211 carries the post-translational modification N6-(pyridoxal phosphate)lysine.

The protein belongs to the class-II pyridoxal-phosphate-dependent aminotransferase family. Histidinol-phosphate aminotransferase subfamily. In terms of assembly, homodimer. The cofactor is pyridoxal 5'-phosphate.

The enzyme catalyses L-histidinol phosphate + 2-oxoglutarate = 3-(imidazol-4-yl)-2-oxopropyl phosphate + L-glutamate. The protein operates within amino-acid biosynthesis; L-histidine biosynthesis; L-histidine from 5-phospho-alpha-D-ribose 1-diphosphate: step 7/9. This is Histidinol-phosphate aminotransferase from Sodalis glossinidius (strain morsitans).